A 123-amino-acid polypeptide reads, in one-letter code: Large ribosomal subunit protein bL20 (123 aa).

The protein belongs to the bacterial ribosomal protein bL20 family.

In terms of biological role, binds directly to 23S ribosomal RNA and is necessary for the in vitro assembly process of the 50S ribosomal subunit. It is not involved in the protein synthesizing functions of that subunit. This is Large ribosomal subunit protein bL20 from Pseudothermotoga lettingae (strain ATCC BAA-301 / DSM 14385 / NBRC 107922 / TMO) (Thermotoga lettingae).